Consider the following 179-residue polypeptide: UPF0227 protein Shewmr4_1727 (179 aa).

This sequence belongs to the UPF0227 family.

The sequence is that of UPF0227 protein Shewmr4_1727 from Shewanella sp. (strain MR-4).